The sequence spans 338 residues: MLIAQRPSLTEEVVDEFRSRFVIEPLEPGFGYTLGNSLRRTLLSSIPGAAVTSIRVDGVLHEFTTVPGVKEDVTDLILNIKQLVVSSEHDEPVVMYLRKQGPGLVTAADIAPPAGVEVHNPDLVLATLNGKGKLEMELTVERGRGYVSAVQNKQVGQEIGRIPVDSIYSPVLKVTYKVEATRVEQRTDFDKLIVDVETKQAMRPRDAMASAGKTLVELFGLARELNIDAEGIDMGPSPVDAALAADLVMPIEELELTVRSYNCLKREGVHSVGELVARSEADLLDIRNFGAKSIDEVKAKLAGMGLGLKDSPPGFDPTAAALGADDDADAGFLETEHY.

Residues 1–226 (MLIAQRPSLT…ELFGLARELN (226 aa)) are alpha N-terminal domain (alpha-NTD). The tract at residues 243-338 (LAADLVMPIE…DAGFLETEHY (96 aa)) is alpha C-terminal domain (alpha-CTD).

This sequence belongs to the RNA polymerase alpha chain family. In terms of assembly, homodimer. The RNAP catalytic core consists of 2 alpha, 1 beta, 1 beta' and 1 omega subunit. When a sigma factor is associated with the core the holoenzyme is formed, which can initiate transcription.

The enzyme catalyses RNA(n) + a ribonucleoside 5'-triphosphate = RNA(n+1) + diphosphate. In terms of biological role, DNA-dependent RNA polymerase catalyzes the transcription of DNA into RNA using the four ribonucleoside triphosphates as substrates. The protein is DNA-directed RNA polymerase subunit alpha of Streptomyces avermitilis (strain ATCC 31267 / DSM 46492 / JCM 5070 / NBRC 14893 / NCIMB 12804 / NRRL 8165 / MA-4680).